A 590-amino-acid polypeptide reads, in one-letter code: Probable serine/threonine-protein phosphatase PP2A regulatory subunit (590 aa).

14 HEAT repeats span residues 37-73 (LSTI…VLAE), 74-111 (QLGN…DKAV), 113-150 (SLRK…TSAC), 151-188 (GLFS…RAAA), 189-227 (AKLG…LLTV), 228-266 (ESAI…YMVA), 267-305 (EKLI…CAAT), 306-344 (QRLQ…QLVK), 349-387 (GVIM…LNII), 388-426 (SSLD…LAIV), 427-465 (QFMP…EAST), 466-504 (LIMK…MTCL), 505-543 (FCLN…FNAA), and 544-582 (KSLK…YFSE).

The protein belongs to the phosphatase 2A regulatory subunit A family. In terms of assembly, part of a complex consisting of a common heterodimeric core enzyme, composed of catalytic subunit let-92 and constant regulatory subunit paa-1, that associates with a variety of regulatory subunits which confer distinct properties to the holoenzyme. Interacts with rsa-1.

Its subcellular location is the cytoplasm. It is found in the cytoskeleton. The protein resides in the microtubule organizing center. The protein localises to the centrosome. It localises to the spindle. In terms of biological role, acts as a scaffolding protein for phosphatase let-92 and its regulatory subunits. Probably together with let-92 and regulatory subunit sur-6, regulates centriole duplication, microtubule outgrowth and mitotic spindle stability during early embryonic cell division by preventing the degradation of sas-5 and kinase zyg-1. During vulva development, may play a role with phosphatase let-92 and regulatory subunit sur-6 in the induction of vulva cell precursors by positively regulating let-60/Ras-MAP kinase signaling, probably by promoting lin-45 activation. Plays a positive role in axon guidance probably by inhibiting phosphatase let-92. In Caenorhabditis elegans, this protein is Probable serine/threonine-protein phosphatase PP2A regulatory subunit (paa-1).